The sequence spans 638 residues: Cell division control protein 45 homolog (638 aa).

The disordered stretch occupies residues 151–204 (ELSDEENSDSSNEREEEVEDDNRSVESYSSSDYQARSRRRFSEETTQRRAEIKE). Acidic residues predominate over residues 153-170 (SDEENSDSSNEREEEVED). Over residues 190 to 204 (RFSEETTQRRAEIKE) the composition is skewed to basic and acidic residues.

Belongs to the CDC45 family. In terms of assembly, interacts with sld3.

The protein localises to the nucleus. Required for initiation of chromosomal DNA replication. May have a role in regulating the MCM proteins nda1 and nda4. The chain is Cell division control protein 45 homolog (sna41) from Schizosaccharomyces pombe (strain 972 / ATCC 24843) (Fission yeast).